The chain runs to 780 residues: Acyl-CoA dehydrogenase family member 11 (780 aa).

At Lys-177 the chain carries N6-acetyllysine. Residue Tyr-324 is modified to Phosphotyrosine. The residue at position 391 (Lys-391) is an N6-succinyllysine. FAD contacts are provided by residues 504–514 (FCMTEPDVASS) and 538–540 (WSS). Ser-514 contacts substrate. Residue 629–632 (GPGR) participates in substrate binding. Residues Arg-657, Gln-727, and 727 to 731 (QVCGG) contribute to the FAD site. Gly-755 contacts substrate. An FAD-binding site is contributed by 756–758 (PDE).

This sequence belongs to the acyl-CoA dehydrogenase family. Homodimer. FAD is required as a cofactor. Widely expressed with highest levels in brain followed by liver, heart and kidney.

It is found in the peroxisome. It localises to the mitochondrion membrane. The enzyme catalyses a 2,3-saturated acyl-CoA + oxidized [electron-transfer flavoprotein] + H(+) = a (2E)-enoyl-CoA + reduced [electron-transfer flavoprotein]. It catalyses the reaction docosanoyl-CoA + oxidized [electron-transfer flavoprotein] + H(+) = (2E)-docosenoyl-CoA + reduced [electron-transfer flavoprotein]. It carries out the reaction tetracosanoyl-CoA + oxidized [electron-transfer flavoprotein] + H(+) = (2E)-tetracosenoyl-CoA + reduced [electron-transfer flavoprotein]. The catalysed reaction is eicosanoyl-CoA + oxidized [electron-transfer flavoprotein] + H(+) = (2E)-eicosenoyl-CoA + reduced [electron-transfer flavoprotein]. The enzyme catalyses hexacosanoyl-CoA + oxidized [electron-transfer flavoprotein] + H(+) = (2E)-hexacosenoyl-CoA + reduced [electron-transfer flavoprotein]. It catalyses the reaction tricosanoyl-CoA + oxidized [electron-transfer flavoprotein] + H(+) = (2E)-tricosenoyl-CoA + reduced [electron-transfer flavoprotein]. The protein operates within lipid metabolism; fatty acid beta-oxidation. Acyl-CoA dehydrogenase, that exhibits maximal activity towards saturated C22-CoA. Probably participates in beta-oxydation and energy production but could also play a role in the metabolism of specific fatty acids to control fatty acids composition of cellular lipids in brain. This chain is Acyl-CoA dehydrogenase family member 11 (ACAD11), found in Homo sapiens (Human).